Here is a 369-residue protein sequence, read N- to C-terminus: Glycolate oxidase 5 (369 aa).

Residues 1-360 (MGEITNVTEY…TRNHVITEAD (360 aa)) enclose the FMN hydroxy acid dehydrogenase domain. Residue Y25 coordinates glyoxylate. FMN is bound by residues 78–80 (PSA), S107, 128–130 (QLY), and T156. Y130 serves as a coordination point for glyoxylate. R165 lines the glyoxylate pocket. FMN contacts are provided by K231 and S253. Glyoxylate contacts are provided by H255 and R258. H255 serves as the catalytic Proton acceptor. FMN-binding positions include 286-290 (DGGVR) and 309-310 (GR). Residues 367–369 (SRL) carry the Microbody targeting signal motif.

It belongs to the FMN-dependent alpha-hydroxy acid dehydrogenase family. In terms of assembly, homotetramer. Requires FMN as cofactor.

Its subcellular location is the peroxisome. The catalysed reaction is glycolate + O2 = glyoxylate + H2O2. Its pathway is photosynthesis; photorespiration; glycine from 2-phosphoglycolate: step 2/3. Its function is as follows. Catalyzes the oxidation of glycolate to glyoxylate, with a reduction of O2 to H2O2. Is a key enzyme in photorespiration in green plants. The sequence is that of Glycolate oxidase 5 (GLO5) from Oryza sativa subsp. japonica (Rice).